Reading from the N-terminus, the 1740-residue chain is DNA polymerase (1740 aa).

The interval 472-491 (IEMPHNQEDSDSEKEDEDTD) is disordered. The segment covering 480–491 (DSDSEKEDEDTD) has biased composition (acidic residues). Positions 1189–1334 (VWGFFMGDGS…LFYLLKSLGY (146 aa)) constitute a DOD-type homing endonuclease domain. Positions 1673–1701 (PKESGSKTAKKPYQSQKLQKTKSSNKSQI) are disordered. The segment covering 1685–1700 (YQSQKLQKTKSSNKSQ) has biased composition (polar residues).

Belongs to the DNA polymerase type-B family. Post-translationally, this protein undergoes a protein self splicing that involves a post-translational excision of the intervening region (intein) followed by peptide ligation.

It catalyses the reaction DNA(n) + a 2'-deoxyribonucleoside 5'-triphosphate = DNA(n+1) + diphosphate. This Acanthamoeba polyphaga (Amoeba) protein is DNA polymerase (POLB).